We begin with the raw amino-acid sequence, 144 residues long: Large ribosomal subunit protein uL11 (144 aa).

Belongs to the universal ribosomal protein uL11 family. In terms of assembly, part of the ribosomal stalk of the 50S ribosomal subunit. Interacts with L10 and the large rRNA to form the base of the stalk. L10 forms an elongated spine to which L12 dimers bind in a sequential fashion forming a multimeric L10(L12)X complex. Post-translationally, one or more lysine residues are methylated.

Forms part of the ribosomal stalk which helps the ribosome interact with GTP-bound translation factors. This is Large ribosomal subunit protein uL11 from Francisella tularensis subsp. holarctica (strain OSU18).